The primary structure comprises 702 residues: 1,4-alpha-glucan-branching enzyme (702 aa).

Ala-2 carries the N-acetylalanine modification. Substrate is bound by residues 62 to 63 and 91 to 93; these read NE and WAP. Residue Trp-107 participates in (1,4-alpha-D-glucosyl)n binding. 118-121 provides a ligand contact to substrate; it reads DYGK. (1,4-alpha-D-glucosyl)n is bound at residue Lys-143. Tyr-173 is modified (phosphotyrosine). 333–336 is a substrate binding site; the sequence is EILR. Residue Asp-357 is the Nucleophile of the active site. Glu-412 (proton donor) is an active-site residue.

Belongs to the glycosyl hydrolase 13 family. GlgB subfamily. As to quaternary structure, monomer.

The catalysed reaction is Transfers a segment of a (1-&gt;4)-alpha-D-glucan chain to a primary hydroxy group in a similar glucan chain.. Its pathway is glycan biosynthesis; glycogen biosynthesis. Glycogen-branching enzyme participates in the glycogen biosynthetic process along with glycogenin and glycogen synthase. Generates alpha-1,6-glucosidic branches from alpha-1,4-linked glucose chains, to increase solubility of the glycogen polymer. The sequence is that of 1,4-alpha-glucan-branching enzyme (GBE1) from Homo sapiens (Human).